The following is a 164-amino-acid chain: Interleukin-10 (164 aa).

Residues 1-18 (MPSSALLCCLIFLARVAA) form the signal peptide. 2 disulfides stabilise this stretch: cysteine 30–cysteine 126 and cysteine 80–cysteine 132. Residue asparagine 134 is glycosylated (N-linked (GlcNAc...) asparagine).

It belongs to the IL-10 family. In terms of assembly, homodimer. Interacts with IL10RA and IL10RB.

It is found in the secreted. Functionally, major immune regulatory cytokine that acts on many cells of the immune system where it has profound anti-inflammatory functions, limiting excessive tissue disruption caused by inflammation. Mechanistically, IL10 binds to its heterotetrameric receptor comprising IL10RA and IL10RB leading to JAK1 and STAT2-mediated phosphorylation of STAT3. In turn, STAT3 translocates to the nucleus where it drives expression of anti-inflammatory mediators. Targets antigen-presenting cells (APCs) such as macrophages and monocytes and inhibits their release of pro-inflammatory cytokines including granulocyte-macrophage colony-stimulating factor /GM-CSF, granulocyte colony-stimulating factor/G-CSF, IL-1 alpha, IL-1 beta, IL-6, IL-8 and TNF-alpha. Also interferes with antigen presentation by reducing the expression of MHC-class II and co-stimulatory molecules, thereby inhibiting their ability to induce T cell activation. In addition, controls the inflammatory response of macrophages by reprogramming essential metabolic pathways including mTOR signaling. The chain is Interleukin-10 (IL10) from Orcinus orca (Killer whale).